The following is a 311-amino-acid chain: Ribosomal RNA small subunit methyltransferase H (311 aa).

Residues 34 to 36 (GGY), Asp-51, Phe-75, Asp-93, and Gln-100 contribute to the S-adenosyl-L-methionine site.

It belongs to the methyltransferase superfamily. RsmH family.

The protein localises to the cytoplasm. The catalysed reaction is cytidine(1402) in 16S rRNA + S-adenosyl-L-methionine = N(4)-methylcytidine(1402) in 16S rRNA + S-adenosyl-L-homocysteine + H(+). Functionally, specifically methylates the N4 position of cytidine in position 1402 (C1402) of 16S rRNA. This Caulobacter vibrioides (strain ATCC 19089 / CIP 103742 / CB 15) (Caulobacter crescentus) protein is Ribosomal RNA small subunit methyltransferase H.